A 108-amino-acid polypeptide reads, in one-letter code: MSDTEYLARAEAVLASVERTVDAANDGDHDIDLERNGSVLTLTFENGSKIIINLQPPMKELWIAAKAGGFHYRFVDGEWRDTRTGTEFFSALTDYATQQAGLPITFRA.

It belongs to the frataxin family.

Involved in iron-sulfur (Fe-S) cluster assembly. May act as a regulator of Fe-S biogenesis. The sequence is that of Iron-sulfur cluster assembly protein CyaY from Burkholderia ambifaria (strain MC40-6).